A 203-amino-acid chain; its full sequence is Akirin-2 (203 aa).

Phosphoserine occurs at positions 18 and 21. The Nuclear localization signal signature appears at 22 to 27 (PKRRRC). A Phosphoserine modification is found at Ser-57. Residues 115-137 (PHAFLLSGPASPGTPSGTSSPLK) are disordered. The span at 119–135 (LLSGPASPGTPSGTSSP) shows a compositional bias: low complexity. Residues 200-203 (SYVS) carry the SYVS motif motif.

It belongs to the akirin family. Homodimer. Interacts with IPO9; the interaction is direct. Associates with 20S and 26S proteasomes. Interacts with SMARCD1; promoting SWI/SNF complex recruitment. Interacts with NFKBIZ. Interacts with YWHAB. Polyubiquitinated. Polyubiquitination is dependent of UBR5 that extends pre-ubiquitinated AKIRIN2.

It is found in the nucleus. It localises to the cytoplasm. Its subcellular location is the membrane. Molecular adapter that acts as a bridge between a variety of multiprotein complexes, and which is involved in embryonic development, immunity, myogenesis and brain development. Plays a key role in nuclear protein degradation by promoting import of proteasomes into the nucleus: directly binds to fully assembled 20S proteasomes at one end and to nuclear import receptor IPO9 at the other end, bridging them together and mediating the import of pre-assembled proteasome complexes through the nuclear pore. Involved in innate immunity by regulating the production of interleukin-6 (IL6) downstream of Toll-like receptor (TLR): acts by bridging the NF-kappa-B inhibitor NFKBIZ and the SWI/SNF complex, leading to promote induction of IL6. Also involved in adaptive immunity by promoting B-cell activation. Involved in brain development: required for the survival and proliferation of cerebral cortical progenitor cells. Involved in myogenesis: required for skeletal muscle formation and skeletal development, possibly by regulating expression of muscle differentiation factors. The sequence is that of Akirin-2 from Bos taurus (Bovine).